The chain runs to 504 residues: MALPVLLLLLALPSRSVQDEELKLNECVCEGMSCGNGDRCQGQQCFASLSINDGAKVYQKGCFQVYEQGKMTCKTPPSPDQAVECCQGYLCNMNITAKLPSSKGQTLQGEAAGYSMETLIIVILAPVVVLVIFSVVAVLIIRRIQKNHMERLNSRDAEYGTIEGLIASNVGDSTLADLLDHSCTSGSGSGLPFLVQRTVARQITLVECVGKGRYGEVWRGQWQGENVAVKIFSSRDEKSWFRETELYNTVLLRHENILGFIASDMTSRNSSTQLWLITHYHEMGSLYDYLQLTTLDTVSCLRIVLSIASGLAHLHIEIFGTQGKPAISHRDLKSKNILVKKNGQCCIADLGLAVMHSQSTNQLDVGNNPRVGTKRYMAPEVLDETIQADCFDSYKRVDIWAFGLVLWEVARRMVSNGIVEDYKPPFYDLVPNDPSFEDMRKVVCVDQQRPNIPNRWFSDPTLTSLAKLMKECWYQNPSARLTALRIKKTLTKIDNSLDKLKADC.

Positions 1–16 are cleaved as a signal peptide; the sequence is MALPVLLLLLALPSRS. Topologically, residues 17-119 are extracellular; it reads VQDEELKLNE…EAAGYSMETL (103 aa). Residue asparagine 94 is glycosylated (N-linked (GlcNAc...) asparagine). Residues 120-140 traverse the membrane as a helical segment; sequence IIVILAPVVVLVIFSVVAVLI. The Cytoplasmic portion of the chain corresponds to 141 to 504; the sequence is IRRIQKNHME…NSLDKLKADC (364 aa). Positions 173-202 constitute a GS domain; sequence STLADLLDHSCTSGSGSGLPFLVQRTVARQ. The Protein kinase domain occupies 203–497; it reads ITLVECVGKG…KTLTKIDNSL (295 aa). Residues 209–217 and lysine 230 contribute to the ATP site; that span reads VGKGRYGEV. The active-site Proton acceptor is aspartate 331.

Belongs to the protein kinase superfamily. TKL Ser/Thr protein kinase family. TGFB receptor subfamily. Mg(2+) is required as a cofactor. The cofactor is Mn(2+).

The protein resides in the membrane. It carries out the reaction L-threonyl-[receptor-protein] + ATP = O-phospho-L-threonyl-[receptor-protein] + ADP + H(+). The enzyme catalyses L-seryl-[receptor-protein] + ATP = O-phospho-L-seryl-[receptor-protein] + ADP + H(+). Its function is as follows. On ligand binding, forms a receptor complex consisting of two type II and two type I transmembrane serine/threonine kinases. Type II receptors phosphorylate and activate type I receptors which autophosphorylate, then bind and activate SMAD transcriptional regulators. Receptor for activin. The polypeptide is Activin receptor type-1 (ACVR1) (Gallus gallus (Chicken)).